The following is a 364-amino-acid chain: Dimethylsulfoniopropionate demethylase DmdA (364 aa).

It belongs to the GcvT family. DmdA subfamily.

The enzyme catalyses S,S-dimethyl-beta-propiothetin + (6S)-5,6,7,8-tetrahydrofolate = 3-(methylsulfanyl)propanoate + (6S)-5-methyl-5,6,7,8-tetrahydrofolate + H(+). In terms of biological role, involved in the assimilation of dimethylsulphoniopropionate (DMSP), an important compound in the fixation of carbon in marine phytoplankton, by mediating demethylation of dimethylsulfoniopropionate (DMSP) to methyl-mercaptopropionate (MMPA). The intracellular concentration of DMSP is estimated to be 70 mM. This chain is Dimethylsulfoniopropionate demethylase DmdA, found in Ruegeria pomeroyi (strain ATCC 700808 / DSM 15171 / DSS-3) (Silicibacter pomeroyi).